The primary structure comprises 382 residues: Manganese peroxidase H4 (382 aa).

The N-terminal stretch at 1 to 24 is a signal peptide; the sequence is MAFGSLLAFVALAAITRAAPTAES. 5 disulfides stabilise this stretch: Cys-27-Cys-39, Cys-38-Cys-313, Cys-57-Cys-141, Cys-277-Cys-344, and Cys-366-Cys-373. Glu-59 and Glu-63 together coordinate Mn(2+). His-70 functions as the Proton acceptor in the catalytic mechanism. Ca(2+) contacts are provided by Asp-71, Gly-86, Asp-88, and Ser-90. Residues Asn-100 and Asn-155 are each glycosylated (N-linked (GlcNAc...) asparagine). Position 197 (His-197) interacts with heme b. A Ca(2+)-binding site is contributed by Thr-198. Asp-203 is a binding site for Mn(2+). Ca(2+)-binding residues include Asp-215, Thr-217, Thr-220, and Asp-222. Residue Asn-241 is glycosylated (N-linked (GlcNAc...) asparagine).

The protein belongs to the peroxidase family. Ligninase subfamily. It depends on heme b as a cofactor. Requires Ca(2+) as cofactor.

The protein localises to the secreted. The catalysed reaction is 2 Mn(2+) + H2O2 + 2 H(+) = 2 Mn(3+) + 2 H2O. Functionally, catalyzes the oxidation of Mn(2+) to Mn(3+). The latter, acting as a diffusible redox mediator, is capable of oxidizing a variety of lignin compounds. This chain is Manganese peroxidase H4, found in Phanerodontia chrysosporium (White-rot fungus).